Consider the following 283-residue polypeptide: Thymidylate synthase (283 aa).

Arg-21 is a dUMP binding site. His-51 provides a ligand contact to (6R)-5,10-methylene-5,6,7,8-tetrahydrofolate. DUMP is bound at residue 123 to 124 (RR). Cys-156 functions as the Nucleophile in the catalytic mechanism. Residues 185-188 (RSAD), Asn-196, and 226-228 (HIY) contribute to the dUMP site. Asp-188 is a binding site for (6R)-5,10-methylene-5,6,7,8-tetrahydrofolate. Residue Ala-282 participates in (6R)-5,10-methylene-5,6,7,8-tetrahydrofolate binding.

Belongs to the thymidylate synthase family. Bacterial-type ThyA subfamily. In terms of assembly, homodimer.

It localises to the cytoplasm. The catalysed reaction is dUMP + (6R)-5,10-methylene-5,6,7,8-tetrahydrofolate = 7,8-dihydrofolate + dTMP. It participates in pyrimidine metabolism; dTTP biosynthesis. Its function is as follows. Catalyzes the reductive methylation of 2'-deoxyuridine-5'-monophosphate (dUMP) to 2'-deoxythymidine-5'-monophosphate (dTMP) while utilizing 5,10-methylenetetrahydrofolate (mTHF) as the methyl donor and reductant in the reaction, yielding dihydrofolate (DHF) as a by-product. This enzymatic reaction provides an intracellular de novo source of dTMP, an essential precursor for DNA biosynthesis. The protein is Thymidylate synthase of Flavobacterium johnsoniae (strain ATCC 17061 / DSM 2064 / JCM 8514 / BCRC 14874 / CCUG 350202 / NBRC 14942 / NCIMB 11054 / UW101) (Cytophaga johnsonae).